A 623-amino-acid polypeptide reads, in one-letter code: Chaperone protein DnaK (623 aa).

Position 197 is a phosphothreonine; by autocatalysis (Thr-197). The segment at 600-623 (KKDENAGANGGNKKDDDVIDAEVE) is disordered.

The protein belongs to the heat shock protein 70 family.

In terms of biological role, acts as a chaperone. This chain is Chaperone protein DnaK, found in Campylobacter concisus (strain 13826).